A 233-amino-acid chain; its full sequence is Orotidine 5'-phosphate decarboxylase (233 aa).

Residues Asp-13, Lys-35, 62–71, Thr-122, Arg-182, Gln-191, Gly-211, and Arg-212 contribute to the substrate site; that span reads DLKFHDIPNT. Lys-64 acts as the Proton donor in catalysis.

The protein belongs to the OMP decarboxylase family. Type 1 subfamily. In terms of assembly, homodimer.

It carries out the reaction orotidine 5'-phosphate + H(+) = UMP + CO2. The protein operates within pyrimidine metabolism; UMP biosynthesis via de novo pathway; UMP from orotate: step 2/2. Its function is as follows. Catalyzes the decarboxylation of orotidine 5'-monophosphate (OMP) to uridine 5'-monophosphate (UMP). The protein is Orotidine 5'-phosphate decarboxylase of Pseudomonas putida (strain W619).